The following is a 160-amino-acid chain: Phosphoribosyl-ATP pyrophosphatase (160 aa).

It belongs to the PRA-PH family.

It is found in the cytoplasm. It carries out the reaction 1-(5-phospho-beta-D-ribosyl)-ATP + H2O = 1-(5-phospho-beta-D-ribosyl)-5'-AMP + diphosphate + H(+). The protein operates within amino-acid biosynthesis; L-histidine biosynthesis; L-histidine from 5-phospho-alpha-D-ribose 1-diphosphate: step 2/9. This is Phosphoribosyl-ATP pyrophosphatase from Granulibacter bethesdensis (strain ATCC BAA-1260 / CGDNIH1).